Here is a 136-residue protein sequence, read N- to C-terminus: Large ribosomal subunit protein uL16c (136 aa).

It belongs to the universal ribosomal protein uL16 family. Part of the 50S ribosomal subunit.

The protein resides in the plastid. It localises to the chloroplast. In Phaseolus angularis (Azuki bean), this protein is Large ribosomal subunit protein uL16c.